Reading from the N-terminus, the 86-residue chain is Large ribosomal subunit protein bL27 (86 aa).

Belongs to the bacterial ribosomal protein bL27 family.

The chain is Large ribosomal subunit protein bL27 from Xanthomonas campestris pv. campestris (strain 8004).